Reading from the N-terminus, the 578-residue chain is Paraneoplastic antigen Ma6F (578 aa).

Disordered regions lie at residues Ala106–Ala221 and Ala441–Lys578. A compositionally biased stretch (low complexity) spans Ala112 to Val129. Gly residues predominate over residues Gly147–Gly159. Positions Ala160–Ala173 are enriched in low complexity. Positions Gly174–Glu211 are enriched in gly residues. The span at Pro449–Ala461 shows a compositional bias: low complexity. Acidic residues-rich tracts occupy residues Ser462–Glu473 and Glu556–Ala566.

This Homo sapiens (Human) protein is Paraneoplastic antigen Ma6F.